We begin with the raw amino-acid sequence, 286 residues long: ATP synthase gamma chain (286 aa).

It belongs to the ATPase gamma chain family. In terms of assembly, F-type ATPases have 2 components, CF(1) - the catalytic core - and CF(0) - the membrane proton channel. CF(1) has five subunits: alpha(3), beta(3), gamma(1), delta(1), epsilon(1). CF(0) has three main subunits: a, b and c.

It is found in the cell inner membrane. Produces ATP from ADP in the presence of a proton gradient across the membrane. The gamma chain is believed to be important in regulating ATPase activity and the flow of protons through the CF(0) complex. This Pseudoalteromonas atlantica (strain T6c / ATCC BAA-1087) protein is ATP synthase gamma chain.